A 452-amino-acid polypeptide reads, in one-letter code: Probable ECA polymerase (452 aa).

11 consecutive transmembrane segments (helical) span residues 6–26 (FSGL…LTWF), 37–57 (VFFS…TSVL), 63–83 (VGVA…CFYG), 118–138 (VILM…NGFL), 155–175 (GVAL…VYFL), 181–201 (AWLF…MIVG), 207–227 (IIIA…ISLW), 228–248 (MLAA…LKRY), 341–361 (LVVM…GLII), 378–398 (YKAA…IVLA), and 410–430 (VFFL…FWLF).

This sequence belongs to the WzyE family. As to quaternary structure, probably part of a complex composed of WzxE, WzyE and WzzE.

The protein localises to the cell inner membrane. It functions in the pathway bacterial outer membrane biogenesis; enterobacterial common antigen biosynthesis. Probably involved in the polymerization of enterobacterial common antigen (ECA) trisaccharide repeat units. The chain is Probable ECA polymerase from Salmonella choleraesuis (strain SC-B67).